We begin with the raw amino-acid sequence, 459 residues long: MTGRAMDPLPSPAVAAAAEAEADEEADPPATGPRTSQVTEWRALDPGRMQMPQGNPLLLSYTLQELLAKDTVQVELIPEKKGLFLKHVEYEVSSQRFKSSVYRRYNDFVVFHEVLLHKFPYRMVPALPPKRVLGADREFIEGRRRALKRFINLVARHPPFSEDVLLKLFLSFSGSDVQHKLKEAAQCVGDEFMNCKLAARAKDFLPADIQTQFAMSRELIRNVYNSFYKLRDRAERIASRAIDNAADLLIFGKELSALGSDTTPLPSWAALHLSTWGSLKQALKGLSVEFALLADRAAQQGKKEENDVVEKLNLFLDLLQSYKDLCERHEKGVLHKHQRALHKYGLMKRQMMSAAHGREPESVEQLESRIVEQENVIQTMELRNYFSLYCLHQETQLVHVYLPLTSHILGAFVNSQIQGHKEMSKVWNDLKPKLSCLFAGPHSVLTPPRSPQEDGVCPH.

The segment at 1–37 is disordered; sequence MTGRAMDPLPSPAVAAAAEAEADEEADPPATGPRTSQ. Residues 68–176 form the PX domain; that stretch reads AKDTVQVELI…KLFLSFSGSD (109 aa). A 1,2-diacyl-sn-glycero-3-phospho-(1D-myo-inositol-3-phosphate) contacts are provided by Arg104, Lys130, and Arg143. Thr446 bears the Phosphothreonine mark. The residue at position 450 (Ser450) is a Phosphoserine.

Belongs to the sorting nexin family.

It is found in the early endosome membrane. Functionally, may be involved in several stages of intracellular trafficking. May play a role in intracellular protein transport from early endosomes to the trans-Golgi network. This chain is Sorting nexin-8 (Snx8), found in Mus musculus (Mouse).